A 305-amino-acid polypeptide reads, in one-letter code: Sulfate adenylyltransferase subunit 2 (305 aa).

This sequence belongs to the PAPS reductase family. CysD subfamily. As to quaternary structure, heterodimer composed of CysD, the smaller subunit, and CysN.

The catalysed reaction is sulfate + ATP + H(+) = adenosine 5'-phosphosulfate + diphosphate. The protein operates within sulfur metabolism; hydrogen sulfide biosynthesis; sulfite from sulfate: step 1/3. With CysN forms the ATP sulfurylase (ATPS) that catalyzes the adenylation of sulfate producing adenosine 5'-phosphosulfate (APS) and diphosphate, the first enzymatic step in sulfur assimilation pathway. APS synthesis involves the formation of a high-energy phosphoric-sulfuric acid anhydride bond driven by GTP hydrolysis by CysN coupled to ATP hydrolysis by CysD. This Pseudomonas entomophila (strain L48) protein is Sulfate adenylyltransferase subunit 2.